We begin with the raw amino-acid sequence, 107 residues long: Integration host factor (107 aa).

The interval 1–20 is disordered; that stretch reads MALPPLTPEQRAAALEKAAA. Low complexity predominate over residues 9-18; it reads EQRAAALEKA. Lys54 contacts DNA. Residues 64–71 carry the H2TH motif, binds DNA motif; sequence LPGVGKVR. Residues Ser82, Arg85, Arg88, Ser92, Asn93, and Gln94 each coordinate DNA. Residues 82 to 94 are lid, binds DNA; it reads SESRRVRGLGSNQ.

It belongs to the actinobacterial IHF (aIHF) family. In terms of assembly, monomer.

It localises to the cytoplasm. Its subcellular location is the spore. It is found in the nucleoid. A nucleoid-associated protein (NAP) that probably plays a role in chromosome compactation. Contributes to development and secondary metabolism, but is dispensable for growth and viability. Binds to the promoter region of a number of genes (including itself); multiple molecules of the protein bind to the DNA simultaneously, deletion alters the expression of about 30 genes (both up- and down-regulation occurs). Plays a role in controlling viability. Binds dsDNA without any obvious sequence specificity, in a concentration and length-dependent manner. Promotes supercoiling in a topoisomerase-dependent manner (counteracts TopA plasmid relaxation). Binds DNA as a monomer, contacting 8 base pairs via the phosphate backbone; each monomer can bind 2 DNA duplexes, allowing a bridging function. Alters DNA topology, constraining negative supercoils, possibly by DNA twist. Longer dsDNA binds more than one sIHF subunit. The protein is Integration host factor of Streptomyces coelicolor (strain ATCC BAA-471 / A3(2) / M145).